The primary structure comprises 308 residues: Olfactory receptor 5K1 (308 aa).

The Extracellular portion of the chain corresponds to 1–25 (MAEENHTMKNEFILTGFTDHPELKT). N-linked (GlcNAc...) asparagine glycosylation is present at Asn5. A helical membrane pass occupies residues 26–46 (LLFVVFFAIYLITVVGNISLV). The Cytoplasmic segment spans residues 47–54 (ALIFTHRR). A helical transmembrane segment spans residues 55–75 (LHTPMYIFLGNLALVDSCCAC). The Extracellular segment spans residues 76–99 (AITPKMLENFFSENKRISLYECAV). A disulfide bond links Cys97 and Cys189. The helical transmembrane segment at 100–120 (QFYFLCTVETADCFLLAAMAY) threads the bilayer. At 121–139 (DRYVAICNPLQYHIMMSKK) the chain is on the cytoplasmic side. The chain crosses the membrane as a helical span at residues 140–160 (LCIQMTTGAFIAGNLHSMIHV). Residues 161–196 (GLVFRLVFCGSNHINHFYCDILPLYRLSCVDPYINE) are Extracellular-facing. The helical transmembrane segment at 197 to 217 (LVLFIFSGSVQVFTIGSVLIS) threads the bilayer. The Cytoplasmic segment spans residues 218 to 237 (YLYILLTIFKMKSKEGRAKA). A helical transmembrane segment spans residues 238–258 (FSTCASHFLSVSLFYGSLFFM). At 259–271 (YVRPNLLEEGDKD) the chain is on the extracellular side. Residues 272–292 (IPAAILFTIVVPLLNPFIYSL) form a helical membrane-spanning segment. The Cytoplasmic segment spans residues 293-308 (RNREVISVLRKILMKK).

It belongs to the G-protein coupled receptor 1 family.

The protein localises to the cell membrane. Its function is as follows. Odorant receptor. In Homo sapiens (Human), this protein is Olfactory receptor 5K1 (OR5K1).